The sequence spans 229 residues: Ribonuclease 3 (229 aa).

Residues 5-127 form the RNase III domain; the sequence is LAGLERKLGY…LIGAIYLDAD (123 aa). Glu40 is a Mg(2+) binding site. Asp44 is an active-site residue. The Mg(2+) site is built by Asp113 and Glu116. Glu116 is an active-site residue. A DRBM domain is found at 154 to 224; sequence DPKTRLQEFL…AASALIALGV (71 aa).

This sequence belongs to the ribonuclease III family. In terms of assembly, homodimer. Requires Mg(2+) as cofactor.

Its subcellular location is the cytoplasm. The catalysed reaction is Endonucleolytic cleavage to 5'-phosphomonoester.. Its function is as follows. Digests double-stranded RNA. Involved in the processing of primary rRNA transcript to yield the immediate precursors to the large and small rRNAs (23S and 16S). Processes some mRNAs, and tRNAs when they are encoded in the rRNA operon. Processes pre-crRNA and tracrRNA of type II CRISPR loci if present in the organism. The chain is Ribonuclease 3 from Pseudomonas putida (strain ATCC 700007 / DSM 6899 / JCM 31910 / BCRC 17059 / LMG 24140 / F1).